The chain runs to 1046 residues: UDP-N-acetylglucosamine--peptide N-acetylglucosaminyltransferase 110 kDa subunit (1046 aa).

Residue alanine 2 is modified to N-acetylalanine. Residues serine 3 and serine 4 each carry the phosphoserine; by GSK3-beta; alternate modification. Residues serine 3 and serine 4 are each glycosylated (O-linked (GlcNAc) serine; alternate). The residue at position 20 (serine 20) is a Phosphoserine. TPR repeat units lie at residues phenylalanine 21–asparagine 54, alanine 89–phenylalanine 122, isoleucine 123–leucine 156, tyrosine 157–phenylalanine 190, alanine 191–phenylalanine 224, leucine 225–histidine 258, alanine 259–phenylalanine 292, proline 293–histidine 326, alanine 327–phenylalanine 360, alanine 361–phenylalanine 394, alanine 395–phenylalanine 428, and alanine 429–phenylalanine 462. O-linked (GlcNAc) serine; by autocatalysis glycosylation is present at serine 399. Phosphothreonine is present on threonine 454. The stretch at proline 463–leucine 473 is one TPR 13; truncated repeat. The short motif at aspartate 464–tyrosine 466 is the DFP motif element. The Nuclear localization signal signature appears at lysine 487–proline 503. Catalysis depends on histidine 508, which acts as the Proton acceptor. UDP is bound by residues glutamine 849, lysine 852, alanine 906–lysine 908, histidine 911–arginine 914, histidine 930–threonine 932, and aspartate 935. A Phosphotyrosine modification is found at tyrosine 989. The segment at lysine 991–lysine 1010 is required for phosphatidylinositol 3,4,5-triphosphate binding.

It belongs to the glycosyltransferase 41 family. O-GlcNAc transferase subfamily. As to quaternary structure, monomer; may exist in different oligomerization states in cells. Homotrimer, oligomerizes via TPR repeats 6 and 7. Trimerization is not necessary for activity in vitro, however it increases affinity for UDP-GlcNAc. Component of a THAP1/THAP3-HCFC1-OGT complex. Component of the NSL complex at least composed of MOF/KAT8, KANSL1, KANSL2, KANSL3, MCRS1, PHF20, OGT1/OGT, WDR5 and HCFC1. Found in a complex with KIF5B, RHOT1, RHOT2 and TRAK1. Found in a complex composed of at least SINHCAF, SIN3A, HDAC1, SAP30, RBBP4, OGT and TET1. Component of a complex composed of KMT2E/MLL5, OGT and USP7; the complex stabilizes KMT2E/MLL5, preventing KMT2E/MLL5 ubiquitination and proteasomal-mediated degradation. Interacts (via TPRs 1-6) with SIN3A; the interaction mediates transcriptional repression in parallel with histone deacetylase. Interacts (via TPR 5-6) with TET1, TET2 and TET3. Interacts (via TPR repeats 6 and 7) with ATXN10. Interacts with NSD2. Interacts with PROSER1; this interaction mediates TET2 O-GlcNAcylation and stability by promoting the interaction between OGT and TET2. In terms of processing, ubiquitinated by the SCF(FBXO31) complex, leading to its proteasomal degradation. Phosphorylation on Ser-3 or Ser-4 by GSK3-beta positively regulates its activity. Phosphorylation at Thr-454 by AMPK promotes nuclear localization. Post-translationally, glycosylated via autocatalysis; O-GlcNAcylation at Ser-399 promotes nuclear localization.

The protein resides in the nucleus. It is found in the cytoplasm. The enzyme catalyses L-seryl-[protein] + UDP-N-acetyl-alpha-D-glucosamine = 3-O-(N-acetyl-beta-D-glucosaminyl)-L-seryl-[protein] + UDP + H(+). It catalyses the reaction L-threonyl-[protein] + UDP-N-acetyl-alpha-D-glucosamine = 3-O-(N-acetyl-beta-D-glucosaminyl)-L-threonyl-[protein] + UDP + H(+). It functions in the pathway protein modification; protein glycosylation. With respect to regulation, subject to product inhibition by UDP. In terms of biological role, catalyzes the transfer of a single N-acetylglucosamine from UDP-GlcNAc to a serine or threonine residue in cytoplasmic and nuclear proteins resulting in their modification with a beta-linked N-acetylglucosamine (O-GlcNAc). Glycosylates a large and diverse number of proteins including histone H2B, AKT1, AMPK, ATG4B, CAPRIN1, EZH2, FNIP1, GSDMD, KRT7, LMNA, LMNB1, LMNB2, RPTOR, HOXA1, PFKL, KMT2E/MLL5, MAPT/TAU, TET2, RBL2, RET, NOD2 and HCFC1. Can regulate their cellular processes via cross-talk between glycosylation and phosphorylation or by affecting proteolytic processing. Involved in insulin resistance in muscle and adipocyte cells via glycosylating insulin signaling components and inhibiting the 'Thr-308' phosphorylation of AKT1, enhancing IRS1 phosphorylation and attenuating insulin signaling. Involved in glycolysis regulation by mediating glycosylation of 6-phosphofructokinase PFKL, inhibiting its activity. Plays a key role in chromatin structure by mediating O-GlcNAcylation of 'Ser-112' of histone H2B: recruited to CpG-rich transcription start sites of active genes via its interaction with TET proteins (TET1, TET2 or TET3). As part of the NSL complex indirectly involved in acetylation of nucleosomal histone H4 on several lysine residues. O-GlcNAcylation of 'Ser-75' of EZH2 increases its stability, and facilitating the formation of H3K27me3 by the PRC2/EED-EZH2 complex. Stabilizes KMT2E/MLL5 by mediating its glycosylation, thereby preventing KMT2E/MLL5 ubiquitination. Regulates circadian oscillation of the clock genes and glucose homeostasis in the liver. Stabilizes clock proteins BMAL1 and CLOCK through O-glycosylation, which prevents their ubiquitination and subsequent degradation. Promotes the CLOCK-BMAL1-mediated transcription of genes in the negative loop of the circadian clock such as PER1/2 and CRY1/2. O-glycosylates HCFC1 and regulates its proteolytic processing and transcriptional activity. Component of a THAP1/THAP3-HCFC1-OGT complex that is required for the regulation of the transcriptional activity of RRM1. Regulates mitochondrial motility in neurons by mediating glycosylation of TRAK1. Promotes autophagy by mediating O-glycosylation of ATG4B. Acts as a regulator of mTORC1 signaling by mediating O-glycosylation of RPTOR and FNIP1: O-GlcNAcylation of RPTOR in response to glucose sufficiency promotes activation of the mTORC1 complex. The sequence is that of UDP-N-acetylglucosamine--peptide N-acetylglucosaminyltransferase 110 kDa subunit (OGT) from Sus scrofa (Pig).